We begin with the raw amino-acid sequence, 551 residues long: Glucans biosynthesis protein D (551 aa).

Residues 1–32 (MNRRRFIKASLALAAACGTPGLATLFSRNAWA) constitute a signal peptide (tat-type signal).

This sequence belongs to the OpgD/OpgG family. Post-translationally, predicted to be exported by the Tat system. The position of the signal peptide cleavage has not been experimentally proven.

It localises to the periplasm. The protein operates within glycan metabolism; osmoregulated periplasmic glucan (OPG) biosynthesis. In terms of biological role, probably involved in the control of the structural glucose backbone of osmoregulated periplasmic glucans (OPGs). In Cronobacter sakazakii (strain ATCC BAA-894) (Enterobacter sakazakii), this protein is Glucans biosynthesis protein D.